The following is a 288-amino-acid chain: Pteridine reductase 1 (288 aa).

17–40 (RLGRSIAEGLHAEGYAVCLHYHRS) is a binding site for NADP(+). Ser-175 serves as a coordination point for substrate. The active-site Proton acceptor is Tyr-194.

The protein belongs to the short-chain dehydrogenases/reductases (SDR) family. In terms of assembly, homotetramer.

It carries out the reaction (6R)-L-erythro-5,6,7,8-tetrahydrobiopterin + 2 NADP(+) = L-erythro-biopterin + 2 NADPH + 2 H(+). Its pathway is cofactor biosynthesis; tetrahydrobiopterin biosynthesis; tetrahydrobiopterin from biopterin: step 1/1. Exhibits a NADPH-dependent biopterin reductase activity. Has good activity with folate and significant activity with dihydrofolate and dihydrobiopterin, but not with quinonoid dihydrobiopterin. Confers resistance to methotrexate (MTX). This Leishmania major protein is Pteridine reductase 1 (PTR1).